The primary structure comprises 367 residues: Phosphoribosylaminoimidazole-succinocarboxamide synthase (367 aa).

This sequence belongs to the SAICAR synthetase family.

The catalysed reaction is 5-amino-1-(5-phospho-D-ribosyl)imidazole-4-carboxylate + L-aspartate + ATP = (2S)-2-[5-amino-1-(5-phospho-beta-D-ribosyl)imidazole-4-carboxamido]succinate + ADP + phosphate + 2 H(+). It participates in purine metabolism; IMP biosynthesis via de novo pathway; 5-amino-1-(5-phospho-D-ribosyl)imidazole-4-carboxamide from 5-amino-1-(5-phospho-D-ribosyl)imidazole-4-carboxylate: step 1/2. The sequence is that of Phosphoribosylaminoimidazole-succinocarboxamide synthase from Shewanella baltica (strain OS155 / ATCC BAA-1091).